A 310-amino-acid polypeptide reads, in one-letter code: Ribosomal RNA small subunit methyltransferase H (310 aa).

S-adenosyl-L-methionine-binding positions include 33-35, D52, F79, D98, and Q105; that span reads GGH.

This sequence belongs to the methyltransferase superfamily. RsmH family.

The protein localises to the cytoplasm. The catalysed reaction is cytidine(1402) in 16S rRNA + S-adenosyl-L-methionine = N(4)-methylcytidine(1402) in 16S rRNA + S-adenosyl-L-homocysteine + H(+). Its function is as follows. Specifically methylates the N4 position of cytidine in position 1402 (C1402) of 16S rRNA. This chain is Ribosomal RNA small subunit methyltransferase H, found in Campylobacter jejuni (strain RM1221).